Reading from the N-terminus, the 469-residue chain is 3-isopropylmalate dehydratase large subunit (469 aa).

Cys-347, Cys-410, and Cys-413 together coordinate [4Fe-4S] cluster.

It belongs to the aconitase/IPM isomerase family. LeuC type 1 subfamily. Heterodimer of LeuC and LeuD. [4Fe-4S] cluster is required as a cofactor.

It catalyses the reaction (2R,3S)-3-isopropylmalate = (2S)-2-isopropylmalate. The protein operates within amino-acid biosynthesis; L-leucine biosynthesis; L-leucine from 3-methyl-2-oxobutanoate: step 2/4. Catalyzes the isomerization between 2-isopropylmalate and 3-isopropylmalate, via the formation of 2-isopropylmaleate. This is 3-isopropylmalate dehydratase large subunit from Cupriavidus pinatubonensis (strain JMP 134 / LMG 1197) (Cupriavidus necator (strain JMP 134)).